We begin with the raw amino-acid sequence, 567 residues long: Serine/threonine-protein kinase SSN3 (567 aa).

The Protein kinase domain maps to 68-470 (YEIIGYIAAG…AINALDHSYF (403 aa)). Residue 74–82 (IAAGTYGKV) participates in ATP binding. Positions 88 to 179 (RQSSKSSSST…RNSENTDNRR (92 aa)) are disordered. The segment covering 90–101 (SSKSSSSTGSDS) has biased composition (low complexity). Composition is skewed to polar residues over residues 102-122 (LAQD…QNAG) and 133-150 (PNSN…ELST). Residues 167 to 179 (GDKRNSENTDNRR) show a composition bias toward basic and acidic residues. K190 contributes to the ATP binding site. Catalysis depends on D293, which acts as the Proton acceptor. Residues 546–556 (AVSGNSSSQSS) are compositionally biased toward low complexity. Residues 546-567 (AVSGNSSSQSSRNMEPMKKKRK) form a disordered region.

This sequence belongs to the protein kinase superfamily. CMGC Ser/Thr protein kinase family. CDC2/CDKX subfamily. As to quaternary structure, component of the SRB8-11 complex, a regulatory module of the Mediator complex. It depends on Mg(2+) as a cofactor.

The protein resides in the nucleus. It catalyses the reaction L-seryl-[protein] + ATP = O-phospho-L-seryl-[protein] + ADP + H(+). The enzyme catalyses L-threonyl-[protein] + ATP = O-phospho-L-threonyl-[protein] + ADP + H(+). It carries out the reaction [DNA-directed RNA polymerase] + ATP = phospho-[DNA-directed RNA polymerase] + ADP + H(+). Functionally, component of the SRB8-11 complex. The SRB8-11 complex is a regulatory module of the Mediator complex which is itself involved in regulation of basal and activated RNA polymerase II-dependent transcription. The SRB8-11 complex may be involved in the transcriptional repression of a subset of genes regulated by Mediator. It may inhibit the association of the Mediator complex with RNA polymerase II to form the holoenzyme complex. The SRB8-11 complex phosphorylates the C-terminal domain (CTD) of the largest subunit of RNA polymerase II. The chain is Serine/threonine-protein kinase SSN3 (SSN3) from Candida glabrata (strain ATCC 2001 / BCRC 20586 / JCM 3761 / NBRC 0622 / NRRL Y-65 / CBS 138) (Yeast).